A 312-amino-acid chain; its full sequence is Ribosomal protein L11 methyltransferase (312 aa).

4 residues coordinate S-adenosyl-L-methionine: T160, G181, D203, and N246.

It belongs to the methyltransferase superfamily. PrmA family.

It localises to the cytoplasm. It carries out the reaction L-lysyl-[protein] + 3 S-adenosyl-L-methionine = N(6),N(6),N(6)-trimethyl-L-lysyl-[protein] + 3 S-adenosyl-L-homocysteine + 3 H(+). Its function is as follows. Methylates ribosomal protein L11. This chain is Ribosomal protein L11 methyltransferase, found in Staphylococcus haemolyticus (strain JCSC1435).